Here is a 1026-residue protein sequence, read N- to C-terminus: Multidrug resistance protein MdtC (1026 aa).

Helical transmembrane passes span Leu-16–Pro-36, Glu-333–Leu-353, Leu-360–Cys-380, Leu-387–Leu-407, Val-435–Ile-455, Leu-459–Leu-479, Trp-528–Pro-548, Leu-853–Ser-873, Leu-897–Val-917, Pro-953–Gly-973, and Ile-984–Val-1004.

Belongs to the resistance-nodulation-cell division (RND) (TC 2.A.6) family. MdtC subfamily. As to quaternary structure, part of a tripartite efflux system composed of MdtA, MdtB and MdtC. MdtC forms a heteromultimer with MdtB.

It localises to the cell inner membrane. The sequence is that of Multidrug resistance protein MdtC from Edwardsiella ictaluri (strain 93-146).